The chain runs to 208 residues: Intraflagellar transport protein 43 homolog (208 aa).

The residue at position 1 (M1) is an N-acetylmethionine. The tract at residues 18–65 (SRAKMGRRAQQESAQAENHLNGKNSSLTLTGETSSAKLPRCRQGGWAG) is disordered. Positions 28–53 (QESAQAENHLNGKNSSLTLTGETSSA) are enriched in polar residues. S78 bears the Phosphoserine mark.

It belongs to the IFT43 family. Component of the IFT complex A (IFT-A) complex. IFT-A complex is divided into a core subcomplex composed of IFT122:IFT140:WDR19 which is associated with TULP3 and a peripheral subcomplex composed of IFT43:WDR35:TTC21B. Interacts directy with IFT122, WDR35 and TTC21B. In terms of tissue distribution, expressed in the retina, predominantly in the photoreceptor outer segment.

The protein resides in the cytoplasm. It is found in the cytoskeleton. Its subcellular location is the cell projection. The protein localises to the cilium. Its function is as follows. As a component of IFT complex A (IFT-A), a complex required for retrograde ciliary transport and entry into cilia of G protein-coupled receptors (GPCRs), it is involved in ciliogenesis. Involved in retrograde ciliary transport along microtubules from the ciliary tip to the base. The chain is Intraflagellar transport protein 43 homolog from Homo sapiens (Human).